The primary structure comprises 792 residues: MKSNLAVFFITCFFCCVFVTSDSVYTLPFPFPRDQVEILLELKNEFPSFNCDLTWKLDYFGRMDTRANISSWTKDSDSFSGVSFDSETGVVKELSLGRQCLTSLKANSSLFRFQHLRYLDLSENHFDSSPIPSGFGRLTYLESLDLSKNGFIGEVPSSISNLSRLTNLDLSYNKLTGGIPNLHSLTLLENIDLSYNKFSGAIPSYLFTMPFLVSLNLRQNHLSDPLENINYSATSKLLILDMAYNLMSHRILEPISKLANLIQIDLSFQKTPYTFNFDFLLFKSLVRLDLSGNSVSVVGTGSENLTHLDLSSCNITEFPMFIKDLQRLWWLDISNNRIKGKVPELLWTLPSMLHVNLSRNSFDSLEGTPKIILNSSISELDLSSNAFKGSFPIIPPYVNIMAASNNYFTGGIPLIFCKRYRLSLLDLSNNNFSGTIPRCLTNVSLGLEALKLSNNSLTGRLPDIEDRLVLLDVGHNQISGKLPRSLVNCTTLKFLNVEGNHINDTFPFWLKALTRLEIIVLRSNRFHGPISSPEVSLSFTALRIIDISRNSFNGSLPQNYFANWSAPLVNTPQGYRWPEYTGDEHSKYETPLWSYPSIHLRIKGRSIELGKIPDTYTSIDFSGNSFEGQIPESIGDLKSLIVLDLSNNSFTGRIPSSLAKLKQLESLDLSQNRISGNIPQELRELTFLGYVNMSHNRLTGQIPQSTQVGGQPKSSFEGNINLCGLPLQESCLRGNGVPSTPHTQEQELPKQEHALNWKAAAIGYGPGVLFGLAIGQAFARYKPVLFYKLFRL.

The signal sequence occupies residues 1–21; that stretch reads MKSNLAVFFITCFFCCVFVTS. The Extracellular portion of the chain corresponds to 22–758; it reads DSVYTLPFPF…PKQEHALNWK (737 aa). N68 and N107 each carry an N-linked (GlcNAc...) asparagine glycan. LRR repeat units follow at residues 114–137, 139–162, 163–187, 189–209, 211–233, 235–258, 259–282, 283–302, 303–324, 325–349, 351–374, and 375–399; these read QHLRYLDLSENHFDSSPIPSGFGR, TYLESLDLSKNGFIGEVPSSISNL, SRLTNLDLSYNKLTGGIPNLHSLTL, ENIDLSYNKFSGAIPSYLFTM, FLVSLNLRQNHLSDPLENINYSA, SKLLILDMAYNLMSHRILEPISKL, ANLIQIDLSFQKTPYTFNFDFLLF, KSLVRLDLSGNSVSVVGTGS, ENLTHLDLSSCNITEFPMFIKD, LQRLWWLDISNNRIKGKVPELLWTL, SMLHVNLSRNSFDSLEGTPKIILN, and SSISELDLSSNAFKGSFPIIPPYVN. Residue N161 is glycosylated (N-linked (GlcNAc...) asparagine). N-linked (GlcNAc...) asparagine glycosylation occurs at N230. N-linked (GlcNAc...) asparagine glycans are attached at residues N304 and N314. N356 and N374 each carry an N-linked (GlcNAc...) asparagine glycan. Residues 400–418 form an LRR 13; degenerate repeat; the sequence is IMAASNNYFTGGIPLIFCK. 4 LRR repeats span residues 419–443, 444–470, 472–489, and 490–515; these read RYRLSLLDLSNNNFSGTIPRCLTNV, SLGLEALKLSNNSLTGRLPDIEDRLVL, DVGHNQISGKLPRSLVNC, and TTLKFLNVEGNHINDTFPFWLKALTR. N-linked (GlcNAc...) asparagine glycans are attached at residues N431, N442, N454, N488, and N503. The LRR 18; degenerate repeat unit spans residues 516–536; the sequence is LEIIVLRSNRFHGPISSPEVS. LRR repeat units follow at residues 539-563, 614-637, 638-661, 662-685, and 687-709; these read FTALRIIDISRNSFNGSLPQNYFAN, DTYTSIDFSGNSFEGQIPESIGDL, KSLIVLDLSNNSFTGRIPSSLAKL, KQLESLDLSQNRISGNIPQELREL, and FLGYVNMSHNRLTGQIPQSTQVG. Residues N553 and N563 are each glycosylated (N-linked (GlcNAc...) asparagine). A glycan (N-linked (GlcNAc...) asparagine) is linked at N647. N692 is a glycosylation site (N-linked (GlcNAc...) asparagine). Residues 759–779 form a helical membrane-spanning segment; the sequence is AAAIGYGPGVLFGLAIGQAFA. Residues 780 to 792 are Cytoplasmic-facing; it reads RYKPVLFYKLFRL.

The protein belongs to the RLP family.

Its subcellular location is the cell membrane. The protein is Receptor-like protein 54 of Arabidopsis thaliana (Mouse-ear cress).